Reading from the N-terminus, the 114-residue chain is uncharacterized protein (114 aa).

It to M.jannaschii MJ0310 and MJ0714.

This is an uncharacterized protein from Methanocaldococcus jannaschii (strain ATCC 43067 / DSM 2661 / JAL-1 / JCM 10045 / NBRC 100440) (Methanococcus jannaschii).